The following is a 337-amino-acid chain: Anthranilate phosphoribosyltransferase (337 aa).

Residues G80, 83 to 84 (GD), T88, 90 to 93 (NIST), 108 to 116 (KHGNRAVSS), and S120 contribute to the 5-phospho-alpha-D-ribose 1-diphosphate site. G80 contributes to the anthranilate binding site. S92 contacts Mg(2+). N111 provides a ligand contact to anthranilate. R166 is a binding site for anthranilate. D224 and E225 together coordinate Mg(2+).

This sequence belongs to the anthranilate phosphoribosyltransferase family. Homodimer. It depends on Mg(2+) as a cofactor.

It carries out the reaction N-(5-phospho-beta-D-ribosyl)anthranilate + diphosphate = 5-phospho-alpha-D-ribose 1-diphosphate + anthranilate. It functions in the pathway amino-acid biosynthesis; L-tryptophan biosynthesis; L-tryptophan from chorismate: step 2/5. Functionally, catalyzes the transfer of the phosphoribosyl group of 5-phosphorylribose-1-pyrophosphate (PRPP) to anthranilate to yield N-(5'-phosphoribosyl)-anthranilate (PRA). The protein is Anthranilate phosphoribosyltransferase of Anaeromyxobacter dehalogenans (strain 2CP-C).